The sequence spans 377 residues: Chaperone protein DnaJ (377 aa).

The J domain maps to 5-70; sequence DCYEVLGISR…QKKAAYDQYG (66 aa). The CR-type zinc-finger motif lies at 133–211; the sequence is GISKEIQIPT…CHGHGRYERS (79 aa). 8 residues coordinate Zn(2+): Cys146, Cys149, Cys163, Cys166, Cys185, Cys188, Cys199, and Cys202. CXXCXGXG motif repeat units follow at residues 146–153, 163–170, 185–192, and 199–206; these read CEQCNGSG, CGTCYGQG, CPTCRGQG, and CHKCHGHG.

It belongs to the DnaJ family. As to quaternary structure, homodimer. Zn(2+) is required as a cofactor.

The protein localises to the cytoplasm. Functionally, participates actively in the response to hyperosmotic and heat shock by preventing the aggregation of stress-denatured proteins and by disaggregating proteins, also in an autonomous, DnaK-independent fashion. Unfolded proteins bind initially to DnaJ; upon interaction with the DnaJ-bound protein, DnaK hydrolyzes its bound ATP, resulting in the formation of a stable complex. GrpE releases ADP from DnaK; ATP binding to DnaK triggers the release of the substrate protein, thus completing the reaction cycle. Several rounds of ATP-dependent interactions between DnaJ, DnaK and GrpE are required for fully efficient folding. Also involved, together with DnaK and GrpE, in the DNA replication of plasmids through activation of initiation proteins. This is Chaperone protein DnaJ from Psychromonas ingrahamii (strain DSM 17664 / CCUG 51855 / 37).